The following is a 525-amino-acid chain: GMP synthase [glutamine-hydrolyzing] (525 aa).

The Glutamine amidotransferase type-1 domain occupies 8-207; that stretch reads KILILDFGSQ…ALDICECEAN (200 aa). Cys85 serves as the catalytic Nucleophile. Catalysis depends on residues His181 and Glu183. Residues 208-400 enclose the GMPS ATP-PPase domain; sequence WKPTSIIEDA…LGLPYDMLYR (193 aa). 235-241 lines the ATP pocket; that stretch reads SGGVDSS.

In terms of assembly, homodimer.

It catalyses the reaction XMP + L-glutamine + ATP + H2O = GMP + L-glutamate + AMP + diphosphate + 2 H(+). The protein operates within purine metabolism; GMP biosynthesis; GMP from XMP (L-Gln route): step 1/1. Catalyzes the synthesis of GMP from XMP. This is GMP synthase [glutamine-hydrolyzing] from Shewanella sediminis (strain HAW-EB3).